Here is a 467-residue protein sequence, read N- to C-terminus: GTPase Der (467 aa).

EngA-type G domains are found at residues 3–167 and 179–352; these read PTLV…PYEE and PVIA…AAAR. Residues 9-16, 56-60, 119-122, 185-192, 232-236, and 297-300 each bind GTP; these read GRPNVGKS, DTGGF, NKTE, DTAGL, and NKWD. A KH-like domain is found at 353 to 437; sequence AHIPTPKLTR…PLRVEFRTGH (85 aa). The tract at residues 434–467 is disordered; it reads RTGHNPYAGKKTPLTEEEARRAHSRRRRNRKKYG. The span at 455–467 shows a compositional bias: basic residues; it reads AHSRRRRNRKKYG.

It belongs to the TRAFAC class TrmE-Era-EngA-EngB-Septin-like GTPase superfamily. EngA (Der) GTPase family. As to quaternary structure, associates with the 50S ribosomal subunit.

GTPase that plays an essential role in the late steps of ribosome biogenesis. This is GTPase Der from Nitrosomonas europaea (strain ATCC 19718 / CIP 103999 / KCTC 2705 / NBRC 14298).